A 229-amino-acid chain; its full sequence is UPF0758 protein Cagg_0777 (229 aa).

Residues 105 to 227 form the MPN domain; the sequence is PIRSPGDVAA…YVSLRERGIG (123 aa). The Zn(2+) site is built by histidine 176, histidine 178, and aspartate 189. The JAMM motif signature appears at 176–189; that stretch reads HNHPSGEATPSPED.

It belongs to the UPF0758 family.

In Chloroflexus aggregans (strain MD-66 / DSM 9485), this protein is UPF0758 protein Cagg_0777.